A 283-amino-acid chain; its full sequence is BTB/POZ domain-containing protein KCTD15 (283 aa).

The disordered stretch occupies residues 1–33 (MPHRKERPSGSSLNAHGSSGTAEGGNMSRLSLT). Positions 9–21 (SGSSLNAHGSSGT) are enriched in polar residues. Ser31, Ser35, and Ser38 each carry phosphoserine. Residues 56–126 (APVHIDVGGH…LRTSKLLLPD (71 aa)) form the BTB domain.

In terms of assembly, forms oligomers, predominantly homopentamers. Interacts with KCTD1, probably forming heteropentamers depending on its abundance in a cell-type dependent manner. Interacts with TFAP2A; this interaction inhibits TFAP2A transcriptional activation. As to expression, expressed in the cerebral cortex, cerebellum, and hypothalamus (at protein level). Expressed in the arcuate hypothalamic nucleus, the ventromedial hypothalamic nucleus and the accumbens nucleus of the ventral striatum.

It is found in the nucleus. In terms of biological role, during embryonic development, interferes with neural crest formation. Inhibits AP2 transcriptional activity by interaction with its activation domain. The sequence is that of BTB/POZ domain-containing protein KCTD15 (Kctd15) from Mus musculus (Mouse).